We begin with the raw amino-acid sequence, 341 residues long: Methionine import ATP-binding protein MetN 2 (341 aa).

The ABC transporter domain maps to 2–241 (IEASELTKVY…PKAPLTQEFI (240 aa)). Residue 38–45 (GYSGAGKS) participates in ATP binding.

The protein belongs to the ABC transporter superfamily. Methionine importer (TC 3.A.1.24) family. In terms of assembly, the complex is composed of two ATP-binding proteins (MetN), two transmembrane proteins (MetI) and a solute-binding protein (MetQ).

The protein localises to the cell membrane. It carries out the reaction L-methionine(out) + ATP + H2O = L-methionine(in) + ADP + phosphate + H(+). The enzyme catalyses D-methionine(out) + ATP + H2O = D-methionine(in) + ADP + phosphate + H(+). In terms of biological role, part of the ABC transporter complex MetNIQ involved in methionine import. Responsible for energy coupling to the transport system. This is Methionine import ATP-binding protein MetN 2 from Shouchella clausii (strain KSM-K16) (Alkalihalobacillus clausii).